The following is a 252-amino-acid chain: Imidazole glycerol phosphate synthase subunit HisF (252 aa).

Catalysis depends on residues Asp-11 and Asp-130.

This sequence belongs to the HisA/HisF family. As to quaternary structure, heterodimer of HisH and HisF.

The protein resides in the cytoplasm. The catalysed reaction is 5-[(5-phospho-1-deoxy-D-ribulos-1-ylimino)methylamino]-1-(5-phospho-beta-D-ribosyl)imidazole-4-carboxamide + L-glutamine = D-erythro-1-(imidazol-4-yl)glycerol 3-phosphate + 5-amino-1-(5-phospho-beta-D-ribosyl)imidazole-4-carboxamide + L-glutamate + H(+). It participates in amino-acid biosynthesis; L-histidine biosynthesis; L-histidine from 5-phospho-alpha-D-ribose 1-diphosphate: step 5/9. In terms of biological role, IGPS catalyzes the conversion of PRFAR and glutamine to IGP, AICAR and glutamate. The HisF subunit catalyzes the cyclization activity that produces IGP and AICAR from PRFAR using the ammonia provided by the HisH subunit. The polypeptide is Imidazole glycerol phosphate synthase subunit HisF (Rhodospirillum rubrum (strain ATCC 11170 / ATH 1.1.1 / DSM 467 / LMG 4362 / NCIMB 8255 / S1)).